The chain runs to 572 residues: MKAQLMITPTASDRTVRFADFPTLTQALDFAATGETGINLYSLRGELVEALPYAKLRDEAVVLARRLLAIGAKVGDSVALLAETDGDFVRAFFACQYAGLLPAPMALPTPLGGREAYIEQISNLARSAKANILIGPVGLKDWVAEIGARAGLAFAGVLADLPEDAGAALPTITPEDPCYLQFSSGSTRTPTGVLVRHKALMANCVAITRDGLQVRASDRAISWLPLYHDMGLIGFLLSPLSCQMTVDLLPTGAFVRRPLLWIDLIGRNKATIAYSPTFGYELCARRVQGQSLENYNLSHWRSAGLGGDMIRMPPLKAFVEAFAPAGFSDKAFVASYGMAEATLALSMAPLGKGLRAETLDVERLERDALAVDAPEGSERARDFARCGPALPDHFLEVRGDDGQVLPERGVGRIFAKGPSVMSAYFANPEETARVLAADGWLDTGDIGFKIDGEIVITGRAKDLIILNGRNIWPQDLEWTADNEIDGLRSGDVCAFAIPAEPEDEVVVLVQARGGDADSRAALRESVATLLRTRHGVEAKVKLVGAHALPQTSSGKLSRSKAKTAYLAGTYGD.

This sequence belongs to the ATP-dependent AMP-binding enzyme family.

It participates in lipid metabolism; sphingolipid metabolism. Its function is as follows. Involved in de novo bacterial ceramide synthesis. This is Putative acyl-CoA synthetase CCNA_01223 from Caulobacter vibrioides (strain NA1000 / CB15N) (Caulobacter crescentus).